A 366-amino-acid chain; its full sequence is UDP-N-acetylenolpyruvoylglucosamine reductase (366 aa).

The 171-residue stretch at 27–197 (LGGPAAGFVV…LRVRFLLRDG (171 aa)) folds into the FAD-binding PCMH-type domain. Residue arginine 175 is part of the active site. Residue serine 252 is the Proton donor of the active site. Glutamate 358 is an active-site residue.

It belongs to the MurB family. It depends on FAD as a cofactor.

The protein localises to the cytoplasm. It catalyses the reaction UDP-N-acetyl-alpha-D-muramate + NADP(+) = UDP-N-acetyl-3-O-(1-carboxyvinyl)-alpha-D-glucosamine + NADPH + H(+). It functions in the pathway cell wall biogenesis; peptidoglycan biosynthesis. Its function is as follows. Cell wall formation. The chain is UDP-N-acetylenolpyruvoylglucosamine reductase from Saccharopolyspora erythraea (strain ATCC 11635 / DSM 40517 / JCM 4748 / NBRC 13426 / NCIMB 8594 / NRRL 2338).